A 436-amino-acid chain; its full sequence is Histidine--tRNA ligase (436 aa).

This sequence belongs to the class-II aminoacyl-tRNA synthetase family.

It localises to the cytoplasm. It catalyses the reaction tRNA(His) + L-histidine + ATP = L-histidyl-tRNA(His) + AMP + diphosphate + H(+). In Thermococcus kodakarensis (strain ATCC BAA-918 / JCM 12380 / KOD1) (Pyrococcus kodakaraensis (strain KOD1)), this protein is Histidine--tRNA ligase.